The chain runs to 332 residues: Ribosomal RNA small subunit methyltransferase C (332 aa).

It belongs to the methyltransferase superfamily. RsmC family. In terms of assembly, monomer.

The protein localises to the cytoplasm. The enzyme catalyses guanosine(1207) in 16S rRNA + S-adenosyl-L-methionine = N(2)-methylguanosine(1207) in 16S rRNA + S-adenosyl-L-homocysteine + H(+). Its function is as follows. Specifically methylates the guanine in position 1207 of 16S rRNA in the 30S particle. The polypeptide is Ribosomal RNA small subunit methyltransferase C (Pseudomonas syringae pv. tomato (strain ATCC BAA-871 / DC3000)).